A 365-amino-acid polypeptide reads, in one-letter code: Peptide chain release factor 2 (365 aa).

At glutamine 252 the chain carries N5-methylglutamine.

The protein belongs to the prokaryotic/mitochondrial release factor family. Methylated by PrmC. Methylation increases the termination efficiency of RF2.

It is found in the cytoplasm. In terms of biological role, peptide chain release factor 2 directs the termination of translation in response to the peptide chain termination codons UGA and UAA. The chain is Peptide chain release factor 2 from Haemophilus ducreyi (strain 35000HP / ATCC 700724).